Reading from the N-terminus, the 305-residue chain is Probable xyloglucan endotransglucosylase/hydrolase protein 21 (305 aa).

An N-terminal signal peptide occupies residues 1–25; that stretch reads MVSSTLLVMSISLFLGLSILLVVHG. The GH16 domain maps to 26–216; it reads KDFNQDIDIT…WSQGPFVASF (191 aa). A glycan (N-linked (GlcNAc...) asparagine) is linked at asparagine 46. Glutamate 102 serves as the catalytic Nucleophile. The Proton donor role is filled by glutamate 106. Glutamate 106 contributes to the xyloglucan binding site. N-linked (GlcNAc...) asparagine glycosylation is present at asparagine 110. Xyloglucan contacts are provided by residues 119-121 and 129-131; these read HTN and DRE. A glycan (N-linked (GlcNAc...) asparagine) is linked at asparagine 146. Residues 195–196 and glycine 200 contribute to the xyloglucan site; that span reads DW. N-linked (GlcNAc...) asparagine glycans are attached at residues asparagine 206 and asparagine 231. 2 disulfides stabilise this stretch: cysteine 225-cysteine 239 and cysteine 282-cysteine 296. Over residues 236-253 the composition is skewed to low complexity; the sequence is TSPCSPGDSTSSSSSSTS. The disordered stretch occupies residues 236 to 258; it reads TSPCSPGDSTSSSSSSTSEWFSQ. Arginine 287 contacts xyloglucan.

This sequence belongs to the glycosyl hydrolase 16 family. XTH group 2 subfamily. Contains at least one intrachain disulfide bond essential for its enzymatic activity. In terms of tissue distribution, predominantly expressed in green siliques.

It is found in the secreted. The protein resides in the cell wall. Its subcellular location is the extracellular space. It localises to the apoplast. It catalyses the reaction breaks a beta-(1-&gt;4) bond in the backbone of a xyloglucan and transfers the xyloglucanyl segment on to O-4 of the non-reducing terminal glucose residue of an acceptor, which can be a xyloglucan or an oligosaccharide of xyloglucan.. Functionally, catalyzes xyloglucan endohydrolysis (XEH) and/or endotransglycosylation (XET). Cleaves and religates xyloglucan polymers, an essential constituent of the primary cell wall, and thereby participates in cell wall construction of growing tissues. This chain is Probable xyloglucan endotransglucosylase/hydrolase protein 21 (XTH21), found in Arabidopsis thaliana (Mouse-ear cress).